The sequence spans 900 residues: Chromodomain-helicase-DNA-binding protein 1-like (900 aa).

In terms of domain architecture, Helicase ATP-binding spans 52–217; the sequence is VQCFHCQNGC…YSLLCVVEPD (166 aa). Position 65 to 72 (65 to 72) interacts with ATP; sequence DEMGLGKT. A DEAH box motif is present at residues 168 to 171; sequence DEAH. Residues 345–507 enclose the Helicase C-terminal domain; it reads LLDRLLAFLY…QKPSAEADFQ (163 aa). Position 534 is a phosphoserine (serine 534). The tract at residues 546 to 569 is disordered; sequence PDALPAAAAAGGGSLEPEEGSELE. The tract at residues 606 to 640 is regulatory linker segment (RLS); the sequence is TLLEKTSHGGRTLRNKGSVLIPGLAEGPIKRKKIL. Serine 612, serine 623, and serine 641 each carry phosphoserine. The required for ATPase activity stretch occupies residues 620–678; it reads NKGSVLIPGLAEGPIKRKKILSPEELEDRRKKRQEAAAKRKRLMEEKRKEKEEAEHRKK. The segment at 641–673 is disordered; sequence SPEELEDRRKKRQEAAAKRKRLMEEKRKEKEEA. A coiled-coil region spans residues 643 to 680; it reads EELEDRRKKRQEAAAKRKRLMEEKRKEKEEAEHRKKMA. A compositionally biased stretch (basic and acidic residues) spans 653–673; the sequence is QEAAAKRKRLMEEKRKEKEEA. Residues 709–900 enclose the Macro domain; it reads SAELAYEDLD…ASSSSAPLVP (192 aa). Serine 894 carries the phosphoserine modification.

Belongs to the SNF2/RAD54 helicase family. In terms of assembly, interacts with nucleosomes; interacts with the acidic patch of histones. Interacts (via macro domain) with PARP1; interacts only when PARP1 is poly-ADP-ribosylated (PARylated). Interacts with CIAO1.

Its subcellular location is the nucleus. The protein localises to the chromosome. It catalyses the reaction ATP + H2O = ADP + phosphate + H(+). Its activity is regulated as follows. Adopts an inactive conformation in absence of DNA damage. Binding to poly-ADP-ribosylated histones activates the ATP-dependent chromatin remodeler activity. In terms of biological role, ATP-dependent chromatin remodeler that mediates chromatin-remodeling following DNA damage. Recruited to DNA damage sites through interaction with poly-ADP-ribose: specifically recognizes and binds histones that are poly-ADP-ribosylated on serine residues in response to DNA damage. Poly-ADP-ribose-binding activates the ATP-dependent chromatin remodeler activity, thereby regulating chromatin during DNA repair. Catalyzes nucleosome sliding away from DNA breaks in an ATP-dependent manner. Chromatin remodeling activity promotes PARP2 removal from chromatin. This Mus musculus (Mouse) protein is Chromodomain-helicase-DNA-binding protein 1-like (Chd1l).